Consider the following 159-residue polypeptide: MGGLKKPKKKYLAGKPKKIWNKQLLLEELQLMGEYGLRNKKELWLARARLKWITRRARSLLSMTAEERAPLEMPFKEKLYKMGFIEDPNVQLDRILSLDVRAILERRLQTIVYRMGLAKSIHHARQLIVHGHVAVAGRRVTSPGFLVPRELEDKISLIQ.

The S4 RNA-binding domain occupies 106–158 (RRLQTIVYRMGLAKSIHHARQLIVHGHVAVAGRRVTSPGFLVPRELEDKISLI).

Belongs to the universal ribosomal protein uS4 family. Part of the 30S ribosomal subunit. Contacts protein S5. The interaction surface between S4 and S5 is involved in control of translational fidelity.

In terms of biological role, one of the primary rRNA binding proteins, it binds directly to 16S rRNA where it nucleates assembly of the body of the 30S subunit. With S5 and S12 plays an important role in translational accuracy. The protein is Small ribosomal subunit protein uS4 of Pyrobaculum aerophilum (strain ATCC 51768 / DSM 7523 / JCM 9630 / CIP 104966 / NBRC 100827 / IM2).